Reading from the N-terminus, the 252-residue chain is 3-deoxy-manno-octulosonate cytidylyltransferase 2 (252 aa).

This sequence belongs to the KdsB family.

The protein resides in the cytoplasm. It carries out the reaction 3-deoxy-alpha-D-manno-oct-2-ulosonate + CTP = CMP-3-deoxy-beta-D-manno-octulosonate + diphosphate. It functions in the pathway nucleotide-sugar biosynthesis; CMP-3-deoxy-D-manno-octulosonate biosynthesis; CMP-3-deoxy-D-manno-octulosonate from 3-deoxy-D-manno-octulosonate and CTP: step 1/1. Its pathway is bacterial outer membrane biogenesis; lipopolysaccharide biosynthesis. In terms of biological role, activates KDO (a required 8-carbon sugar) for incorporation into bacterial lipopolysaccharide in Gram-negative bacteria. The protein is 3-deoxy-manno-octulosonate cytidylyltransferase 2 of Actinobacillus pleuropneumoniae serotype 5b (strain L20).